Reading from the N-terminus, the 514-residue chain is Glycosyltransferase-like At3g57200 (514 aa).

The interval 1–23 (MAGLYSSSSSSKPTLSSSPSSSS) is disordered. The signal sequence occupies residues 1–39 (MAGLYSSSSSSKPTLSSSPSSSSSSRLFLLVTLLPLSLA). N-linked (GlcNAc...) asparagine glycans are attached at residues Asn156, Asn187, Asn251, and Asn460. Residues 457–514 (PSKNSSTADSTSGITRESSQETGKRRVLEFHLDVDGESQASAVPPQSPPGLEATQMEL) are disordered. The segment covering 458-473 (SKNSSTADSTSGITRE) has biased composition (polar residues). Basic and acidic residues predominate over residues 474–490 (SSQETGKRRVLEFHLDV).

It belongs to the glycosyltransferase 25 family.

The protein localises to the secreted. The protein resides in the cell wall. Its subcellular location is the cytoplasm. It localises to the cell membrane. Functionally, involved in the coordination between cell elongation and cellulose synthesis by promoting the expression of genes involved in cell elongation and cellulose synthesis. Acts as a regulator of plasmodesmatal permeability. Maybe a glycosyltransferase. The polypeptide is Glycosyltransferase-like At3g57200 (Arabidopsis thaliana (Mouse-ear cress)).